The sequence spans 282 residues: Chromatin modification-related protein YNG2 (282 aa).

A coiled-coil region spans residues 35–86 (LIEEKKKYEQKESQIHKFIRQQGSIPKHPQEDGLDKEIKESLLKCQSLQREK). Residues 123–217 (DGDMDSAAEA…KGQNGSPENE (95 aa)) form a disordered region. Over residues 129–143 (AAEASRESSVVSNSS) the composition is skewed to low complexity. Ser183 carries the post-translational modification Phosphoserine. Thr185 is subject to Phosphothreonine. Position 188 is a phosphoserine (Ser188). A compositionally biased stretch (basic and acidic residues) spans 191–203 (IEKKIARTKEFKN). Positions 204–214 (SRNGKGQNGSP) are enriched in polar residues. The segment at 222 to 271 (TLYCFCQRVSFGEMVACDGPNCKYEWFHYDCVNLKEPPKGTWYCPECKIE) adopts a PHD-type zinc-finger fold. The Zn(2+) site is built by Cys225, Cys227, Cys238, Cys243, His249, Cys252, Cys265, and Cys268.

The protein belongs to the ING family. Interacts with H3K4me3 and to a lesser extent with H3K4me2. Component of the NuA4 histone acetyltransferase complex composed of at least ACT1, ARP4, YAF9, VID21, SWC4, EAF3, EAF5, EAF6, EAF7, EPL1, ESA1, TRA1 and YNG2.

Its subcellular location is the nucleus. Component of the NuA4 histone acetyltransferase complex which is involved in transcriptional activation of selected genes principally by acetylation of nucleosomal histone H4 and H2A. The NuA4 complex is also involved in DNA repair. Involved in cell cycle progression and meiosis. The polypeptide is Chromatin modification-related protein YNG2 (YNG2) (Saccharomyces cerevisiae (strain ATCC 204508 / S288c) (Baker's yeast)).